Reading from the N-terminus, the 144-residue chain is Large ribosomal subunit protein uL13 (144 aa).

The protein belongs to the universal ribosomal protein uL13 family. In terms of assembly, part of the 50S ribosomal subunit.

In terms of biological role, this protein is one of the early assembly proteins of the 50S ribosomal subunit, although it is not seen to bind rRNA by itself. It is important during the early stages of 50S assembly. In Chloroflexus aurantiacus (strain ATCC 29366 / DSM 635 / J-10-fl), this protein is Large ribosomal subunit protein uL13.